We begin with the raw amino-acid sequence, 667 residues long: Long-chain-fatty-acid--CoA ligase ACSBG2 (667 aa).

A compositionally biased stretch (basic and acidic residues) spans 1 to 14 (MTQEKKAEDPDRGM). The segment at 1-20 (MTQEKKAEDPDRGMDTTSAA) is disordered. ATP-binding positions include 227–235 (TSGTTGSPK), 418–423 (EIYGMT), Asp-496, Arg-511, and Arg-624.

It belongs to the ATP-dependent AMP-binding enzyme family. Bubblegum subfamily.

The protein resides in the cytoplasm. It localises to the membrane. It catalyses the reaction a long-chain fatty acid + ATP + CoA = a long-chain fatty acyl-CoA + AMP + diphosphate. The catalysed reaction is (5Z,8Z,11Z,14Z)-eicosatetraenoate + ATP + CoA = (5Z,8Z,11Z,14Z)-eicosatetraenoyl-CoA + AMP + diphosphate. It carries out the reaction hexadecanoate + ATP + CoA = hexadecanoyl-CoA + AMP + diphosphate. The enzyme catalyses (9Z)-octadecenoate + ATP + CoA = (9Z)-octadecenoyl-CoA + AMP + diphosphate. It catalyses the reaction (9Z,12Z)-octadecadienoate + ATP + CoA = (9Z,12Z)-octadecadienoyl-CoA + AMP + diphosphate. The catalysed reaction is tetracosanoate + ATP + CoA = tetracosanoyl-CoA + AMP + diphosphate. Catalyzes the conversion of fatty acids such as long chain and very long-chain fatty acids to their active form acyl-CoAs for both synthesis of cellular lipids, and degradation via beta-oxidation. Can activate diverse saturated, monosaturated and polyunsaturated fatty acids. Has increased ability to activate oleic and linoleic acid. May play a role in spermatogenesis. The sequence is that of Long-chain-fatty-acid--CoA ligase ACSBG2 from Rattus norvegicus (Rat).